We begin with the raw amino-acid sequence, 86 residues long: Defensin-like protein 97 (86 aa).

A signal peptide spans 1-27; that stretch reads MGSLRVSTFAVAVVVCLSILLMSPTDG. 4 disulfides stabilise this stretch: Cys-31–Cys-74, Cys-38–Cys-60, Cys-44–Cys-71, and Cys-48–Cys-73.

This sequence belongs to the DEFL family.

The protein resides in the secreted. In Arabidopsis thaliana (Mouse-ear cress), this protein is Defensin-like protein 97 (LCR85).